Reading from the N-terminus, the 792-residue chain is Ubiquitin carboxyl-terminal hydrolase 10 (792 aa).

The segment at 2 to 27 (TTQESIKPLVDRILSNPLQFNAAMIS) is DHR2-binding module. 2 disordered regions span residues 64–87 (AESK…NTVP) and 103–320 (KDAA…SITP). The span at 107–129 (DATGAKKSAELSTELSTEPPSSS) shows a compositional bias: low complexity. Residues 109–145 (TGAKKSAELSTELSTEPPSSSSEDDKVGKEEEEEGEI) are SIR4-binding module. Over residues 144–171 (EIFHEARDYVEPRKASLKERDNADKGDG) the composition is skewed to basic and acidic residues. Residues 167–208 (DKGDGEDIGEDIGEDIGEDIGEDIGEDIGENLGSPLATIDDS) are UTP22-binding module. Positions 172 to 195 (EDIGEDIGEDIGEDIGEDIGEDIG) are enriched in acidic residues. Positions 211 to 220 (ENEKEKRKEL) are enriched in basic and acidic residues. The segment covering 226–241 (SDDEIEDDEDEDDMDY) has biased composition (acidic residues). A compositionally biased stretch (polar residues) spans 288–297 (VNNTKENGNR). The USP domain maps to 362 to 733 (RGLLNHGVTC…NAYYLLYTRL (372 aa)). The Nucleophile role is filled by C371. Positions 526–563 (LDPNSDLSSDSINGTSATTSTTTSNAATKPSLSSSSSV) are disordered. Residues 530 to 539 (SDLSSDSING) show a composition bias toward polar residues. Residues 540–563 (TSATTSTTTSNAATKPSLSSSSSV) show a composition bias toward low complexity. The active-site Proton acceptor is the H691. Over residues 749–766 (TGNVTSKSKQEQAVNEPN) the composition is skewed to polar residues. Residues 749-792 (TGNVTSKSKQEQAVNEPNNRPLKINSKKNNRKKWKKNKKRKFTK) are disordered. Basic residues predominate over residues 773–792 (NSKKNNRKKWKKNKKRKFTK).

It belongs to the peptidase C19 family. As to quaternary structure, interacts with SIR4. Interacts with the proliferating-cell nuclear antigen PCNA/POL30. Interacts with DHR2 and UTP22.

It localises to the nucleus. The protein resides in the chromosome. The protein localises to the telomere. It is found in the nucleolus. It catalyses the reaction Thiol-dependent hydrolysis of ester, thioester, amide, peptide and isopeptide bonds formed by the C-terminal Gly of ubiquitin (a 76-residue protein attached to proteins as an intracellular targeting signal).. Its function is as follows. Deubiquitinating enzyme involved in telomere and HM loci silencing, which is the repression of chromatin structure which leads to a stop in the transcription of nearby genes. Targets histone H2B for deubiquitination, thus helping to localize SIR2 to the telomere. At silent chromatin, including telomeres and the rDNA locus, not only maintains low H2B 'Lys-123' ubiquitination (H2BK123Ub), but also low H3 'Lys-4' and 'Lys-79' methylation (H3K4me and H3K79me, respectively). Controls the proliferating-cell nuclear antigen PCNA/POL30 deubiquitination which is crucial for keeping TLS polymerases in check as well as for down-regulating the error-free bypass. Deubiquitinates and stabilizes RPA190, the largest subunit of RNA polymerase I, to achieve optimal levels of ribosomes and cell growth. Also protects nutrient transporters such as GAP1 from ubiquitin-dependent endocytosis. In Saccharomyces cerevisiae (strain ATCC 204508 / S288c) (Baker's yeast), this protein is Ubiquitin carboxyl-terminal hydrolase 10 (UBP10).